We begin with the raw amino-acid sequence, 285 residues long: Probable endonuclease 4 (285 aa).

The Zn(2+) site is built by histidine 69, histidine 109, glutamate 145, aspartate 179, histidine 182, histidine 216, aspartate 229, histidine 231, and glutamate 261.

Belongs to the AP endonuclease 2 family. It depends on Zn(2+) as a cofactor.

The catalysed reaction is Endonucleolytic cleavage to 5'-phosphooligonucleotide end-products.. Its function is as follows. Endonuclease IV plays a role in DNA repair. It cleaves phosphodiester bonds at apurinic or apyrimidinic (AP) sites, generating a 3'-hydroxyl group and a 5'-terminal sugar phosphate. This chain is Probable endonuclease 4, found in Salmonella heidelberg (strain SL476).